We begin with the raw amino-acid sequence, 424 residues long: Serine--tRNA ligase (424 aa).

An L-serine-binding site is contributed by 230–232 (TAE). 261 to 263 (RSE) contributes to the ATP binding site. An L-serine-binding site is contributed by Glu284. 348 to 351 (EISS) is a binding site for ATP. Residue Ser382 coordinates L-serine.

This sequence belongs to the class-II aminoacyl-tRNA synthetase family. Type-1 seryl-tRNA synthetase subfamily. Homodimer. The tRNA molecule binds across the dimer.

The protein resides in the cytoplasm. It catalyses the reaction tRNA(Ser) + L-serine + ATP = L-seryl-tRNA(Ser) + AMP + diphosphate + H(+). It carries out the reaction tRNA(Sec) + L-serine + ATP = L-seryl-tRNA(Sec) + AMP + diphosphate + H(+). It functions in the pathway aminoacyl-tRNA biosynthesis; selenocysteinyl-tRNA(Sec) biosynthesis; L-seryl-tRNA(Sec) from L-serine and tRNA(Sec): step 1/1. Its function is as follows. Catalyzes the attachment of serine to tRNA(Ser). Is also able to aminoacylate tRNA(Sec) with serine, to form the misacylated tRNA L-seryl-tRNA(Sec), which will be further converted into selenocysteinyl-tRNA(Sec). The protein is Serine--tRNA ligase of Solibacter usitatus (strain Ellin6076).